The following is a 321-amino-acid chain: MAEQVLVGDVGGTNARLALCSLQDGSLSHIKNYSGAEYPSLEAVIRVYLEETAAKVSSACIAIACPITGDWVAMTNHTWAFSQSEMQQNLGLQHLSIINDFTAISMAIPALKDEDKIQFGGEAAQAGKPIAVYGAGTGLGVAHLVHSGEAWMSLPGEGGHVDFAPNSTEEVMVLEALREELGHVSAERLLSGPGLVNIYRGLVLSDDRVPENLQPKDVTERALADEDIDCRRALSLFCVLMGRFGGNLALNLGTFGGVYIAGGIVPRFLEFFKASGFRVAFEDKGRFHSYLEPIPVFLITHEQPGLLGSGAYLRQKLGYKL.

8-13 is an ATP binding site; it reads GDVGGT.

Belongs to the bacterial glucokinase family.

It localises to the cytoplasm. It carries out the reaction D-glucose + ATP = D-glucose 6-phosphate + ADP + H(+). The sequence is that of Glucokinase from Tolumonas auensis (strain DSM 9187 / NBRC 110442 / TA 4).